The primary structure comprises 177 residues: Small ribosomal subunit protein uS5 (177 aa).

One can recognise an S5 DRBM domain in the interval Leu21–Val84.

It belongs to the universal ribosomal protein uS5 family. Part of the 30S ribosomal subunit. Contacts proteins S4 and S8.

Its function is as follows. With S4 and S12 plays an important role in translational accuracy. Functionally, located at the back of the 30S subunit body where it stabilizes the conformation of the head with respect to the body. The chain is Small ribosomal subunit protein uS5 from Rhodopirellula baltica (strain DSM 10527 / NCIMB 13988 / SH1).